Here is a 346-residue protein sequence, read N- to C-terminus: Rhomboid protein 1, mitochondrial (346 aa).

Residues 1 to 73 constitute a mitochondrion transit peptide; the sequence is MSGVSSVMLG…RFFSQTSILK (73 aa). Helical transmembrane passes span 109 to 129, 145 to 165, 203 to 223, 246 to 266, 275 to 295, and 308 to 328; these read SMTILGLSLMAGIYFGSPYLF, LVYALLGINVAVFGLWQLPKC, MLALWSFGTSLATMLGASNFF, LAIVGPSLGASGALFGVLGCF, ILLFVFPVPGGAWVAFLASVA, and FDYAAHLGGSMMGVLYGWYIS. S256 serves as the catalytic Nucleophile. The active site involves H313.

Belongs to the peptidase S54 family.

The protein localises to the mitochondrion inner membrane. It carries out the reaction Cleaves type-1 transmembrane domains using a catalytic dyad composed of serine and histidine that are contributed by different transmembrane domains.. Functionally, mitochondrial rhomboid serine protease processing the mitochondrial membrane fusion regulator MGM1, and the cytochrome c peroxidase (CCP1). Required for TIM11 stability, ATP synthase complex assembly, mitochondrial morphology, cytochrome c (CYC1) storage and mitochondrial genome maintenance. The polypeptide is Rhomboid protein 1, mitochondrial (PCP1) (Saccharomyces cerevisiae (strain ATCC 204508 / S288c) (Baker's yeast)).